Here is an 83-residue protein sequence, read N- to C-terminus: Protein WFDC9 (83 aa).

Residues 1–24 (MKPWIIVLTVSAHGILVFLHVLGS) form the signal peptide.

Its subcellular location is the secreted. The protein is Protein WFDC9 (Wfdc9) of Mus musculus (Mouse).